The sequence spans 118 residues: Large ribosomal subunit protein bL19 (118 aa).

This sequence belongs to the bacterial ribosomal protein bL19 family.

Functionally, this protein is located at the 30S-50S ribosomal subunit interface and may play a role in the structure and function of the aminoacyl-tRNA binding site. The chain is Large ribosomal subunit protein bL19 from Beutenbergia cavernae (strain ATCC BAA-8 / DSM 12333 / CCUG 43141 / JCM 11478 / NBRC 16432 / NCIMB 13614 / HKI 0122).